Consider the following 705-residue polypeptide: Translation initiation factor IF-2 (705 aa).

The segment at 40 to 124 (DDQIKALDKK…QPAAPKEIPS (85 aa)) is disordered. Residues 41–58 (DQIKALDKKFKKEQKNDN) are compositionally biased toward basic and acidic residues. A compositionally biased stretch (low complexity) spans 59 to 77 (KQSTQNNHQKSNNQNQNKG). Over residues 94–108 (KGNKKNNRNNKKNNK) the composition is skewed to basic residues. In terms of domain architecture, tr-type G spans 207-376 (ERPAVVTIMG…GLVAEVQELK (170 aa)). Residues 216–223 (GHVDHGKT) are G1. 216–223 (GHVDHGKT) contacts GTP. A G2 region spans residues 241-245 (GITQH). The tract at residues 262–265 (DTPG) is G3. GTP contacts are provided by residues 262–266 (DTPGH) and 316–319 (NKID). The G4 stretch occupies residues 316-319 (NKID). Residues 352–354 (SAL) form a G5 region.

It belongs to the TRAFAC class translation factor GTPase superfamily. Classic translation factor GTPase family. IF-2 subfamily.

Its subcellular location is the cytoplasm. In terms of biological role, one of the essential components for the initiation of protein synthesis. Protects formylmethionyl-tRNA from spontaneous hydrolysis and promotes its binding to the 30S ribosomal subunits. Also involved in the hydrolysis of GTP during the formation of the 70S ribosomal complex. The chain is Translation initiation factor IF-2 from Staphylococcus aureus (strain Mu3 / ATCC 700698).